We begin with the raw amino-acid sequence, 250 residues long: Aquaporin SIP2-1 (250 aa).

A run of 2 helical transmembrane segments spans residues 14 to 34 and 55 to 75; these read PWLV…GALV and VALS…TGGA. Positions 78 to 80 match the NPA 1 motif; it reads NPL. 4 consecutive transmembrane segments (helical) span residues 95–115, 132–152, 178–200, and 211–231; these read LYLF…ILGV, SVGV…VVIV, FHLL…AWAY, and LLVY…VVTL. An NPA 2 motif is present at residues 191-193; that stretch reads NPA.

It belongs to the MIP/aquaporin (TC 1.A.8) family. SIP (TC 1.A.8.10) subfamily. Expressed in leaves and anthers, and at lower levels in roots.

The protein localises to the membrane. Functionally, aquaporins facilitate the transport of water and small neutral solutes across cell membranes. The polypeptide is Aquaporin SIP2-1 (SIP2-1) (Oryza sativa subsp. japonica (Rice)).